We begin with the raw amino-acid sequence, 137 residues long: Basic phospholipase A2 homolog Ts-R6 (137 aa).

The first 16 residues, 1–16 (MRTLWIMAVLLLGVEG), serve as a signal peptide directing secretion. Disulfide bonds link cysteine 42–cysteine 130, cysteine 44–cysteine 60, cysteine 59–cysteine 110, cysteine 65–cysteine 137, cysteine 66–cysteine 103, cysteine 73–cysteine 97, and cysteine 91–cysteine 101.

As to expression, expressed by the venom gland.

Its subcellular location is the secreted. Snake venom phospholipase A2 homolog that induces local edema a few hours after injection (5-10 ug) in the hind paw and shows weak anticoagulant and myotoxic activities. In Trimeresurus stejnegeri (Chinese green tree viper), this protein is Basic phospholipase A2 homolog Ts-R6.